We begin with the raw amino-acid sequence, 345 residues long: Transcription factor STKL1 (345 aa).

The tract at residues 1 to 145 (MASLENPAID…KKGHAQRVWS (145 aa)) is disordered. Low complexity predominate over residues 11-22 (SSSEFESSSEEI). Residues 23 to 32 (SSSKESKPKE) show a composition bias toward basic and acidic residues. Residues 37 to 46 (VPSTKTLNSP) show a composition bias toward polar residues. A Phosphoserine modification is found at S105. A compositionally biased stretch (basic and acidic residues) spans 114-137 (RASEGTTSRDMHVKRIKKEGDNKK).

This sequence belongs to the GeBP family. In terms of tissue distribution, expressed strongly in leaves and flowers, weakly in roots, and very weakly in stems.

It localises to the nucleus. Its function is as follows. Transcription repressor that binds DNA in a sequence-specific manner, 5'-GCCT-3', to regulate the expression of PGR. Acts as a modulatory component for the glucose-triggered developmental leaf growth process. The polypeptide is Transcription factor STKL1 (Arabidopsis thaliana (Mouse-ear cress)).